Consider the following 426-residue polypeptide: Formate-dependent phosphoribosylglycinamide formyltransferase (426 aa).

Residues 26–27 (EL) and Glu-86 each bind N(1)-(5-phospho-beta-D-ribosyl)glycinamide. Residues Arg-118, Lys-158, 197-200 (EEFI), and Glu-205 contribute to the ATP site. The ATP-grasp domain occupies 123–324 (EAIASTGART…EFALHAKAVL (202 aa)). Mg(2+)-binding residues include Glu-279 and Glu-293. Residues Asp-300, Lys-374, and 381–382 (RR) contribute to the N(1)-(5-phospho-beta-D-ribosyl)glycinamide site.

The protein belongs to the PurK/PurT family. In terms of assembly, homodimer.

The catalysed reaction is N(1)-(5-phospho-beta-D-ribosyl)glycinamide + formate + ATP = N(2)-formyl-N(1)-(5-phospho-beta-D-ribosyl)glycinamide + ADP + phosphate + H(+). The protein operates within purine metabolism; IMP biosynthesis via de novo pathway; N(2)-formyl-N(1)-(5-phospho-D-ribosyl)glycinamide from N(1)-(5-phospho-D-ribosyl)glycinamide (formate route): step 1/1. Involved in the de novo purine biosynthesis. Catalyzes the transfer of formate to 5-phospho-ribosyl-glycinamide (GAR), producing 5-phospho-ribosyl-N-formylglycinamide (FGAR). Formate is provided by PurU via hydrolysis of 10-formyl-tetrahydrofolate. In Methanocella arvoryzae (strain DSM 22066 / NBRC 105507 / MRE50), this protein is Formate-dependent phosphoribosylglycinamide formyltransferase.